A 1072-amino-acid chain; its full sequence is DNA-directed RNA polymerase subunit beta (1072 aa).

This sequence belongs to the RNA polymerase beta chain family. As to quaternary structure, in plastids the minimal PEP RNA polymerase catalytic core is composed of four subunits: alpha, beta, beta', and beta''. When a (nuclear-encoded) sigma factor is associated with the core the holoenzyme is formed, which can initiate transcription.

The protein resides in the plastid. The protein localises to the chloroplast. The catalysed reaction is RNA(n) + a ribonucleoside 5'-triphosphate = RNA(n+1) + diphosphate. In terms of biological role, DNA-dependent RNA polymerase catalyzes the transcription of DNA into RNA using the four ribonucleoside triphosphates as substrates. The polypeptide is DNA-directed RNA polymerase subunit beta (Cycas taitungensis (Prince sago)).